The primary structure comprises 332 residues: 2,3-diketo-L-gulonate reductase (332 aa).

Catalysis depends on His-44, which acts as the Proton donor. Residues 168–174 (ITMVDMS), 224–225 (WK), and 304–306 (GHE) each bind NAD(+).

It belongs to the LDH2/MDH2 oxidoreductase family. DlgD subfamily. Homodimer.

Its subcellular location is the cytoplasm. The enzyme catalyses 3-dehydro-L-gulonate + NAD(+) = 2,3-dioxo-L-gulonate + NADH + H(+). The catalysed reaction is 3-dehydro-L-gulonate + NADP(+) = 2,3-dioxo-L-gulonate + NADPH + H(+). In terms of biological role, catalyzes the reduction of 2,3-diketo-L-gulonate in the presence of NADH, to form 3-keto-L-gulonate. The protein is 2,3-diketo-L-gulonate reductase of Salmonella agona (strain SL483).